The chain runs to 878 residues: E3 ubiquitin-protein ligase SH3RF3 (878 aa).

A disordered region spans residues 19–40 (RGEGEDRQGEQQRGAQARTEED). The segment at 52–93 (CSVCLERLDTTAKVLPCQHTFCRRCLESIVCSRHELRCPECR) adopts an RING-type zinc-finger fold. The tract at residues 120-145 (PRTGASPGSSPPARPGPGTFSALAGG) is disordered. 2 SH3 domains span residues 187-246 (SQLP…CVRP) and 249-312 (QALP…LNDS). The tract at residues 364 to 433 (RVDSKKNAKK…TVPTQDSSSA (70 aa)) is interaction with RAC1. At S395 the chain carries Phosphoserine. Positions 458-519 (LPLNVYLALY…PGNYVTPVSR (62 aa)) constitute an SH3 3 domain. Disordered stretches follow at residues 574-659 (QHPA…CPRP) and 688-758 (PISG…MGPE). Composition is skewed to polar residues over residues 590–609 (AQPT…THAS), 618–633 (ATVS…SRLP), 643–653 (ASPQHGQQSPA), and 690–699 (SGLSTPSLIN). The segment covering 703-716 (KPDDKKNEKKEKKS) has biased composition (basic and acidic residues). Residues 741–752 (HDPQSAMDTSLQ) are compositionally biased toward polar residues. S792 is subject to Phosphoserine. The SH3 4 domain occupies 819 to 878 (LPRERYRVVVSYPPQSEAEIELKEGDIVFVHKKHEDGWFKGTLQRNGRTGLFPGSFVESF).

Belongs to the SH3RF family. Interacts (via SH3 domain 3) with PAK2. Interacts with RAC1 (GTP-bound form). In terms of processing, autoubiquitinated.

The catalysed reaction is S-ubiquitinyl-[E2 ubiquitin-conjugating enzyme]-L-cysteine + [acceptor protein]-L-lysine = [E2 ubiquitin-conjugating enzyme]-L-cysteine + N(6)-ubiquitinyl-[acceptor protein]-L-lysine.. It functions in the pathway protein modification; protein ubiquitination. In terms of biological role, has E3 ubiquitin-protein ligase activity. This chain is E3 ubiquitin-protein ligase SH3RF3 (Sh3rf3), found in Mus musculus (Mouse).